The following is a 59-amino-acid chain: Putative potassium channel toxin Ts25 (59 aa).

The N-terminal stretch at 1–22 is a signal peptide; it reads MKAFYGILIIFILISMIHLSQQ. Disulfide bonds link cysteine 29/cysteine 50, cysteine 35/cysteine 55, and cysteine 39/cysteine 57.

It belongs to the short scorpion toxin superfamily. Potassium channel inhibitor family. Alpha-KTx 04 subfamily. Expressed by the venom gland.

It localises to the secreted. Potently blocks Kv1.1/KCNA1 (85%), Kv1.2/KCNA2 (91%), Kv1.3/KCNA3 (89%), Kv1.6/KCNA6 (94%), and Shaker (97%). The protein is Putative potassium channel toxin Ts25 of Tityus serrulatus (Brazilian scorpion).